A 615-amino-acid chain; its full sequence is DNA mismatch repair protein MutL (615 aa).

Positions 369–397 (REPVAPRYTPAPASGSRPAAPWPNAQPGY) are disordered. The span at 378 to 391 (PAPASGSRPAAPWP) shows a compositional bias: low complexity.

Belongs to the DNA mismatch repair MutL/HexB family.

Its function is as follows. This protein is involved in the repair of mismatches in DNA. It is required for dam-dependent methyl-directed DNA mismatch repair. May act as a 'molecular matchmaker', a protein that promotes the formation of a stable complex between two or more DNA-binding proteins in an ATP-dependent manner without itself being part of a final effector complex. This is DNA mismatch repair protein MutL from Escherichia coli (strain SMS-3-5 / SECEC).